A 580-amino-acid polypeptide reads, in one-letter code: Negative elongation factor B (580 aa).

Lys-519 carries the post-translational modification N6-acetyllysine. The disordered stretch occupies residues 548 to 580 (LEQLDHRKPSPAQAAETPALELPLPSVPAPAPL). Position 557 is a phosphoserine (Ser-557).

Belongs to the NELF-B family. The NELF complex is composed of NELFA, NELFB, NELFCD (isoform NELF-C or isoform NELF-D) and NELFE; the N-terminus of NELFB binds to the NELFA:NELFCD subcomplex. Binds RNA which may help to stabilize the NELF complex on nucleic acid. Interacts with the first BRCT repeat of BRCA1. Interacts with KIAA1191. Interacts with NELFE. In terms of tissue distribution, widely expressed. Expressed in heart, brain, lung, placenta, liver, skeletal muscle, kidney and pancreas.

Its subcellular location is the nucleus. Its function is as follows. Essential component of the NELF complex, a complex that negatively regulates the elongation of transcription by RNA polymerase II. The NELF complex, which acts via an association with the DSIF complex and causes transcriptional pausing, is counteracted by the P-TEFb kinase complex. May be able to induce chromatin unfolding. Essential for early embryogenesis; plays an important role in maintaining the undifferentiated state of embryonic stem cells (ESCs) by preventing unscheduled expression of developmental genes. Plays a key role in establishing the responsiveness of stem cells to developmental cues; facilitates plasticity and cell fate commitment in ESCs by establishing the appropriate expression level of signaling molecules. Supports the transcription of genes involved in energy metabolism in cardiomyocytes; facilitates the association of transcription initiation factors with the promoters of the metabolism-related genes. In terms of biological role, (Microbial infection) The NELF complex is involved in HIV-1 latency possibly involving recruitment of PCF11 to paused RNA polymerase II. In vitro, binds weakly to the HIV-1 TAR RNA which is located in the long terminal repeat (LTR) of HIV-1. The polypeptide is Negative elongation factor B (NELFB) (Homo sapiens (Human)).